Reading from the N-terminus, the 417-residue chain is Lissencephaly-1 homolog (417 aa).

Positions 7–39 constitute a LisH domain; it reads QKEELNRAIADYLFANGYVKALNAFREESQLAG. Residues 54-86 are a coiled coil; sequence TSVIRLQKKVMDLEAKLNEAEKEFQSMQNAIGF. 7 WD repeats span residues 120–159, 162–203, 204–243, 246–285, 288–340, 343–382, and 385–417; these read GHRS…FEHT, GHTD…KTLT, GHDH…CTKT, GHTE…CQVV, GHEH…CLFV, GHDN…CHKT, and AHSH…WDCR.

The protein belongs to the WD repeat LIS1/nudF family.

It localises to the cytoplasm. It is found in the cytoskeleton. The protein resides in the microtubule organizing center. The protein localises to the centrosome. Functionally, positively regulates the activity of the minus-end directed microtubule motor protein dynein. May enhance dynein-mediated microtubule sliding by targeting dynein to the microtubule plus end. Required for several dynein- and microtubule-dependent processes. The polypeptide is Lissencephaly-1 homolog (Schistosoma mansoni (Blood fluke)).